The primary structure comprises 236 residues: Leucyl/phenylalanyl-tRNA--protein transferase (236 aa).

The protein belongs to the L/F-transferase family.

The protein localises to the cytoplasm. It carries out the reaction N-terminal L-lysyl-[protein] + L-leucyl-tRNA(Leu) = N-terminal L-leucyl-L-lysyl-[protein] + tRNA(Leu) + H(+). The enzyme catalyses N-terminal L-arginyl-[protein] + L-leucyl-tRNA(Leu) = N-terminal L-leucyl-L-arginyl-[protein] + tRNA(Leu) + H(+). The catalysed reaction is L-phenylalanyl-tRNA(Phe) + an N-terminal L-alpha-aminoacyl-[protein] = an N-terminal L-phenylalanyl-L-alpha-aminoacyl-[protein] + tRNA(Phe). In terms of biological role, functions in the N-end rule pathway of protein degradation where it conjugates Leu, Phe and, less efficiently, Met from aminoacyl-tRNAs to the N-termini of proteins containing an N-terminal arginine or lysine. The polypeptide is Leucyl/phenylalanyl-tRNA--protein transferase (Shewanella sediminis (strain HAW-EB3)).